We begin with the raw amino-acid sequence, 257 residues long: MGQKVNPNGLRFGINKQWLSRWVPTDQLQMAKWLVEDDKIRKYLSTKYKNAGIDHVEIERDQQRVNVYVYAVQSGLLIGTEASEKKLIELAINKIVGRKQLVSLKVVEVQIPELQASLMAREIADAIENRVSFRIAQKMVIKKVLKAGARGIKTHVSGRLGGVEMAREEGYTQGVMTLHTLRADIDYSMQEAHTTYGIIGVKVWINRGELFGNKLVNSVAHAANKEFSRSSKPKKGSFNRSSRSKNTKPAPKQAVSE.

A KH type-2 domain is found at 40–110; the sequence is IRKYLSTKYK…LVSLKVVEVQ (71 aa). Positions 223-257 are disordered; the sequence is ANKEFSRSSKPKKGSFNRSSRSKNTKPAPKQAVSE. Basic residues predominate over residues 231–246; the sequence is SKPKKGSFNRSSRSKN.

Belongs to the universal ribosomal protein uS3 family. As to quaternary structure, part of the 30S ribosomal subunit. Forms a tight complex with proteins S10 and S14.

In terms of biological role, binds the lower part of the 30S subunit head. Binds mRNA in the 70S ribosome, positioning it for translation. The polypeptide is Small ribosomal subunit protein uS3 (Ureaplasma parvum serovar 3 (strain ATCC 27815 / 27 / NCTC 11736)).